A 1499-amino-acid chain; its full sequence is Tyrosine-protein phosphatase non-receptor type 23 (1499 aa).

A BRO1 domain is found at 1–219; sequence LNVNLMLGQA…AKIEDKNEVL (219 aa). TPR repeat units lie at residues 75–108 and 199–232; these read AVAH…LNEA and EEKA…DPDT. Coiled coils occupy residues 278 to 305, 377 to 464, and 506 to 537; these read EASL…LGQA, KAVL…NVQY, and YADL…LLDR. 2 disordered regions span residues 536 to 583 and 718 to 1006; these read DREL…MMAG and HMAL…LLQP. A his region spans residues 598-993; that stretch reads HFSPGPFPGS…SSSPESQHGG (396 aa). Over residues 724 to 752 the composition is skewed to pro residues; sequence GPAPAPPQPCFPVPQPVPQSVPQPQPLPT. Polar residues predominate over residues 754 to 763; sequence YTYSIGTKQH. Residue R785 is modified to Omega-N-methylarginine. 4 stretches are compositionally biased toward pro residues: residues 785–827, 856–866, 900–909, and 934–972; these read RIGP…PQPQ, LTPPPPYPFTP, FPSPGPPHPH, and GPPP…PPPC. A run of 20 repeats spans residues 788-789, 790-791, 792-793, 794-795, 796-797, 798-799, 800-801, 802-803, 804-805, 806-807, 808-809, 810-811, 812-813, 814-815, 816-817, 818-819, 820-821, 822-823, 824-825, and 826-827. The segment at 788–827 is 20 X 2 AA approximate tandem repeats of P-Q; that stretch reads PQPPPQLQPQPQPQPQPQPPPQPQPQPQPQPQPQPQPQPQ. S985 and S986 each carry phosphoserine. T994 carries the phosphothreonine modification. The Tyrosine-protein phosphatase domain maps to 1055–1315; that stretch reads DAVWRELQEA…KFCHEALVRH (261 aa). C1255 (phosphocysteine intermediate) is an active-site residue. Disordered regions lie at residues 1322–1351 and 1381–1499; these read RHGV…QDLV and ASLP…LNKT. Polar residues predominate over residues 1335–1348; the sequence is MSVSQKSHLPQDSQ. Positions 1390–1419 are enriched in pro residues; it reads PGLPPASLPEPTPAPPSSPPPPSSPLPEPP. Positions 1427–1450 are enriched in low complexity; the sequence is VPEAPSLGPPSSSLELLASLTPEA. Residues 1464–1473 show a composition bias toward polar residues; the sequence is SKQNFLQAHN. R1478 is subject to Omega-N-methylarginine. The segment covering 1482 to 1499 has biased composition (low complexity); the sequence is PTDDPLSLLDPLWTLNKT.

The protein belongs to the protein-tyrosine phosphatase family. Non-receptor class subfamily. In terms of assembly, interacts with GRAP2 and GRB2. Interacts with UBAP1 and CHMP4B. In terms of tissue distribution, ubiquitously expressed, with highest levels in brain, testis and kidney, and lowest levels in skeletal muscle.

The protein resides in the nucleus. It localises to the cytoplasm. It is found in the cytoplasmic vesicle. The protein localises to the endosome. Its subcellular location is the cytoskeleton. The protein resides in the cilium basal body. The enzyme catalyses O-phospho-L-tyrosyl-[protein] + H2O = L-tyrosyl-[protein] + phosphate. Its function is as follows. Plays a role in sorting of endocytic ubiquitinated cargos into multivesicular bodies (MVBs) via its interaction with the ESCRT-I complex (endosomal sorting complex required for transport I), and possibly also other ESCRT complexes. May act as a negative regulator of Ras-mediated mitogenic activity. Plays a role in ciliogenesis. The sequence is that of Tyrosine-protein phosphatase non-receptor type 23 (Ptpn23) from Rattus norvegicus (Rat).